Reading from the N-terminus, the 119-residue chain is Large ribosomal subunit protein uL24 (119 aa).

This sequence belongs to the universal ribosomal protein uL24 family. Part of the 50S ribosomal subunit.

Its function is as follows. One of two assembly initiator proteins, it binds directly to the 5'-end of the 23S rRNA, where it nucleates assembly of the 50S subunit. In terms of biological role, one of the proteins that surrounds the polypeptide exit tunnel on the outside of the subunit. This chain is Large ribosomal subunit protein uL24, found in Leptospira interrogans serogroup Icterohaemorrhagiae serovar copenhageni (strain Fiocruz L1-130).